The sequence spans 633 residues: Peptidoglycan D,D-transpeptidase MrdA (633 aa).

Residues 22-42 (LVAFLGILLLTGVLIANLYNL) traverse the membrane as a helical segment. S330 serves as the catalytic Acyl-ester intermediate.

The protein belongs to the transpeptidase family. MrdA subfamily.

It is found in the cell inner membrane. It catalyses the reaction Preferential cleavage: (Ac)2-L-Lys-D-Ala-|-D-Ala. Also transpeptidation of peptidyl-alanyl moieties that are N-acyl substituents of D-alanine.. The protein operates within cell wall biogenesis; peptidoglycan biosynthesis. In terms of biological role, catalyzes cross-linking of the peptidoglycan cell wall. The chain is Peptidoglycan D,D-transpeptidase MrdA from Escherichia coli O157:H7.